The chain runs to 133 residues: Pheromone-regulated membrane protein 3 (133 aa).

Residues Met-1–Ser-104 are Nuclear-facing. Positions Ala-36–Glu-100 are disordered. Positions Gly-69 to Lys-75 match the Bipartite nuclear localization signal motif. Residues Lys-90–Glu-100 show a composition bias toward basic and acidic residues. The chain crosses the membrane as a helical span at residues Phe-105 to Ala-127. Topologically, residues Val-128–Asn-133 are perinuclear space.

In terms of assembly, interacts with KAR5.

The protein localises to the nucleus outer membrane. It is found in the cytoplasm. The protein resides in the cytoskeleton. Its subcellular location is the microtubule organizing center. It localises to the spindle pole body. Required for the fusion of nuclear envelopes during mating, ensuring proper karyogamy. Plays a role in the initiation of outer nuclear envelope fusion. This is Pheromone-regulated membrane protein 3 (PRM3) from Saccharomyces cerevisiae (strain ATCC 204508 / S288c) (Baker's yeast).